A 93-amino-acid polypeptide reads, in one-letter code: Large ribosomal subunit protein bL31 (93 aa).

The interval 68–93 is disordered; that stretch reads GSADAAADEKKPDAKNNNKDNTSKED. The span at 74–93 shows a compositional bias: basic and acidic residues; sequence ADEKKPDAKNNNKDNTSKED.

Belongs to the bacterial ribosomal protein bL31 family. Type A subfamily. In terms of assembly, part of the 50S ribosomal subunit.

Its function is as follows. Binds the 23S rRNA. The protein is Large ribosomal subunit protein bL31 of Prochlorococcus marinus (strain MIT 9313).